Here is a 261-residue protein sequence, read N- to C-terminus: Cytochrome c oxidase subunit 3 (261 aa).

The Mitochondrial matrix segment spans residues 1 to 15 (MVHQSHAYHMLKPSP). Residues 16–34 (WPLTGALSALLMTSGLAMW) traverse the membrane as a helical segment. Residues 35-40 (FHFHST) are Mitochondrial intermembrane-facing. The helical transmembrane segment at 41 to 66 (TLLLTGMLTNALTMYQWWRDVVREST) threads the bilayer. The Mitochondrial matrix segment spans residues 67–72 (YQGHHT). Residues 73 to 105 (LPVQKGLRYGMILFITSEVFFFAGFFWAFYHSS) form a helical membrane-spanning segment. Residues 106–128 (LAPTPQLGGHWPPTGITPLNPLE) are Mitochondrial intermembrane-facing. The chain crosses the membrane as a helical span at residues 129–152 (VPLLNTAVLLASGVSITWAHHSLM). Topologically, residues 153-155 (ENN) are mitochondrial matrix. The chain crosses the membrane as a helical span at residues 156–183 (RTQMIQALLITILLGIYFTLLQASEYIE). At 184 to 190 (APFTISD) the chain is on the mitochondrial intermembrane side. A helical transmembrane segment spans residues 191–223 (GIYGSTFFMTTGFHGLHVIIGSTFLTVCLSCQL). At 224 to 232 (LFHFTSKHH) the chain is on the mitochondrial matrix side. A helical membrane pass occupies residues 233 to 256 (FGFEAAAWYWHFVDVVWLFLYVSI). At 257-261 (YWWGS) the chain is on the mitochondrial intermembrane side.

This sequence belongs to the cytochrome c oxidase subunit 3 family. As to quaternary structure, component of the cytochrome c oxidase (complex IV, CIV), a multisubunit enzyme composed of 14 subunits. The complex is composed of a catalytic core of 3 subunits MT-CO1, MT-CO2 and MT-CO3, encoded in the mitochondrial DNA, and 11 supernumerary subunits COX4I, COX5A, COX5B, COX6A, COX6B, COX6C, COX7A, COX7B, COX7C, COX8 and NDUFA4, which are encoded in the nuclear genome. The complex exists as a monomer or a dimer and forms supercomplexes (SCs) in the inner mitochondrial membrane with NADH-ubiquinone oxidoreductase (complex I, CI) and ubiquinol-cytochrome c oxidoreductase (cytochrome b-c1 complex, complex III, CIII), resulting in different assemblies (supercomplex SCI(1)III(2)IV(1) and megacomplex MCI(2)III(2)IV(2)).

The protein resides in the mitochondrion inner membrane. The catalysed reaction is 4 Fe(II)-[cytochrome c] + O2 + 8 H(+)(in) = 4 Fe(III)-[cytochrome c] + 2 H2O + 4 H(+)(out). In terms of biological role, component of the cytochrome c oxidase, the last enzyme in the mitochondrial electron transport chain which drives oxidative phosphorylation. The respiratory chain contains 3 multisubunit complexes succinate dehydrogenase (complex II, CII), ubiquinol-cytochrome c oxidoreductase (cytochrome b-c1 complex, complex III, CIII) and cytochrome c oxidase (complex IV, CIV), that cooperate to transfer electrons derived from NADH and succinate to molecular oxygen, creating an electrochemical gradient over the inner membrane that drives transmembrane transport and the ATP synthase. Cytochrome c oxidase is the component of the respiratory chain that catalyzes the reduction of oxygen to water. Electrons originating from reduced cytochrome c in the intermembrane space (IMS) are transferred via the dinuclear copper A center (CU(A)) of subunit 2 and heme A of subunit 1 to the active site in subunit 1, a binuclear center (BNC) formed by heme A3 and copper B (CU(B)). The BNC reduces molecular oxygen to 2 water molecules using 4 electrons from cytochrome c in the IMS and 4 protons from the mitochondrial matrix. This chain is Cytochrome c oxidase subunit 3 (MT-CO3), found in Pongo pygmaeus (Bornean orangutan).